Reading from the N-terminus, the 220-residue chain is LHFPL tetraspan subfamily member 1 protein (220 aa).

Residues 1 to 20 (MRSSLTMVGTLWAFLSLVTA) form the signal peptide. Transmembrane regions (helical) follow at residues 86 to 106 (VVTG…VLGC) and 122 to 142 (AAQF…PLGW). The N-linked (GlcNAc...) asparagine glycan is linked to Asn-153. A helical membrane pass occupies residues 165-185 (LGWAYYCAGGGAAAAMLICTW).

This sequence belongs to the LHFP family. In terms of tissue distribution, widely expressed. Expressed at high levels in lung, thymus, skeletal muscle, colon and ovary.

The protein localises to the membrane. This Homo sapiens (Human) protein is LHFPL tetraspan subfamily member 1 protein.